The primary structure comprises 582 residues: tRNA-guanine(15) transglycosylase (582 aa).

Asp95 functions as the Nucleophile in the catalytic mechanism. Asp130 and Gly196 together coordinate substrate. Residues Cys279, Cys281, and Cys284 each contribute to the Zn(2+) site. The PUA domain maps to 507 to 582; that stretch reads RMRVVVNKEA…RAVKVRKGVE (76 aa).

The protein belongs to the archaeosine tRNA-ribosyltransferase family. In terms of assembly, homodimer. It depends on Zn(2+) as a cofactor.

It carries out the reaction guanosine(15) in tRNA + 7-cyano-7-deazaguanine = 7-cyano-7-carbaguanosine(15) in tRNA + guanine. It functions in the pathway tRNA modification; archaeosine-tRNA biosynthesis. Exchanges the guanine residue with 7-cyano-7-deazaguanine (preQ0) at position 15 in the dihydrouridine loop (D-loop) of archaeal tRNAs. This chain is tRNA-guanine(15) transglycosylase (tgtA), found in Pyrococcus horikoshii (strain ATCC 700860 / DSM 12428 / JCM 9974 / NBRC 100139 / OT-3).